A 580-amino-acid polypeptide reads, in one-letter code: MELSHDTKNLLDLVKKAYEGEVALPDFQRNFVWTRQDIEELIKSLLENMFIGTFLIQEINPENPPFGTIYIRGAEELNPNITLRKPRILVLDGQQRLTSLFYAIYSPNFPLKNTTKPYAFFIDLNKLVEDDIDNSVFSLSKDCRQYKALLNEDNSFDIEKLKEKRFFPLTFLSNSNKFYKIWYKHFSEIFPEEVFNYMHNILEYKVPTLILGLSYNDKPEQVVVLFERINKTGIKLSPYDLLVARFYKFIKLREKWAEAFENNIRIKNFAGDVEDTKVPYMFIQALALSKGMSIKSRDLIKIDNSILNDESWNRVVDIAENKVFQRIFDISEYGIADIKKWNPYTPTITMMLAFFLKHDIPDMDKVNKWYWSSVFSERYSGSTESKMMKDFKEVSQWIENNNKIPEVVENLKIEIQYGAYSLKKVKSSGSSKYKGVFNLIFKNKPMDFYKPDNIAYYKLEDHHIFPKGFLRNKGISNEYIDSVLNKTPILDETNKKISKKSPSKYVKEMIEIQKNKGLSEDEAVNKVKEILKGHFINEEMFEILRNTDDSLSKDEIEENFNRFIELREKLILEKILELIS.

This is an uncharacterized protein from Methanocaldococcus jannaschii (strain ATCC 43067 / DSM 2661 / JAL-1 / JCM 10045 / NBRC 100440) (Methanococcus jannaschii).